Reading from the N-terminus, the 492-residue chain is Histone-lysine N-methyltransferase ASHH1 (492 aa).

The AWS domain maps to 36–87 (EDISICECKFDFGDPDSACGERCLNVITNTECTPGYCPCGVYCKNQKFQKCE). In terms of domain architecture, SET spans 84 to 206 (QKCEYAKTKL…PRTELAYDYN (123 aa)). Positions 213 to 229 (AKVRCLCGAVACSGFLG) constitute a Post-SET domain. The tract at residues 259–340 (SAEDELTSEP…NSQEDSSPKT (82 aa)) is disordered. Residues 266-275 (SEPSKNGESN) show a composition bias toward polar residues. The span at 277 to 290 (NEEKEKDISTENHL) shows a compositional bias: basic and acidic residues. Over residues 291–306 (ESTALNIQQQSDSTPT) the composition is skewed to polar residues. A compositionally biased stretch (basic and acidic residues) spans 317–326 (VKTETSEDMK). Residues 328–339 (LSQNSQEDSSPK) show a composition bias toward polar residues.

It belongs to the class V-like SAM-binding methyltransferase superfamily. Histone-lysine methyltransferase family. SET2 subfamily.

Its subcellular location is the nucleus. It is found in the chromosome. It localises to the centromere. The catalysed reaction is L-lysyl(4)-[histone H3] + 3 S-adenosyl-L-methionine = N(6),N(6),N(6)-trimethyl-L-lysyl(4)-[histone H3] + 3 S-adenosyl-L-homocysteine + 3 H(+). Its function is as follows. Histone methyltransferase involved in regulation of flowering time. Required for the expression of the SOC1/AGL20 gene. Required for histone H3 trimethylation on 'Lys-4' (H3K4me3) at the SOC1 locus. Prevents trimethylation on 'Lys-27' (H3K27me3) at the same locus. The protein is Histone-lysine N-methyltransferase ASHH1 (ASHH1) of Arabidopsis thaliana (Mouse-ear cress).